The following is a 156-amino-acid chain: ATP synthase subunit b (156 aa).

Residues 7–29 (LLGQAISFAMFVWFCMKYVWPPI) form a helical membrane-spanning segment.

This sequence belongs to the ATPase B chain family. F-type ATPases have 2 components, F(1) - the catalytic core - and F(0) - the membrane proton channel. F(1) has five subunits: alpha(3), beta(3), gamma(1), delta(1), epsilon(1). F(0) has three main subunits: a(1), b(2) and c(10-14). The alpha and beta chains form an alternating ring which encloses part of the gamma chain. F(1) is attached to F(0) by a central stalk formed by the gamma and epsilon chains, while a peripheral stalk is formed by the delta and b chains.

It localises to the cell inner membrane. Its function is as follows. F(1)F(0) ATP synthase produces ATP from ADP in the presence of a proton or sodium gradient. F-type ATPases consist of two structural domains, F(1) containing the extramembraneous catalytic core and F(0) containing the membrane proton channel, linked together by a central stalk and a peripheral stalk. During catalysis, ATP synthesis in the catalytic domain of F(1) is coupled via a rotary mechanism of the central stalk subunits to proton translocation. Component of the F(0) channel, it forms part of the peripheral stalk, linking F(1) to F(0). The chain is ATP synthase subunit b from Vibrio vulnificus (strain CMCP6).